We begin with the raw amino-acid sequence, 361 residues long: Phospho-N-acetylmuramoyl-pentapeptide-transferase (361 aa).

The next 10 membrane-spanning stretches (helical) occupy residues 28-48, 74-94, 99-119, 133-153, 168-188, 203-223, 236-256, 263-283, 288-308, and 338-358; these read LAII…IKFL, TMGG…LADL, IWIT…DDYA, SKLL…EYLD, LSLD…VGSS, VPIA…GNLI, TGEL…FLWF, VFMG…ISVI, IVLA…ILQV, and KVVI…LSSL.

It belongs to the glycosyltransferase 4 family. MraY subfamily. Mg(2+) is required as a cofactor.

The protein resides in the cell membrane. The enzyme catalyses UDP-N-acetyl-alpha-D-muramoyl-L-alanyl-gamma-D-glutamyl-meso-2,6-diaminopimeloyl-D-alanyl-D-alanine + di-trans,octa-cis-undecaprenyl phosphate = di-trans,octa-cis-undecaprenyl diphospho-N-acetyl-alpha-D-muramoyl-L-alanyl-D-glutamyl-meso-2,6-diaminopimeloyl-D-alanyl-D-alanine + UMP. The protein operates within cell wall biogenesis; peptidoglycan biosynthesis. Its function is as follows. Catalyzes the initial step of the lipid cycle reactions in the biosynthesis of the cell wall peptidoglycan: transfers peptidoglycan precursor phospho-MurNAc-pentapeptide from UDP-MurNAc-pentapeptide onto the lipid carrier undecaprenyl phosphate, yielding undecaprenyl-pyrophosphoryl-MurNAc-pentapeptide, known as lipid I. This Rickettsia montanensis protein is Phospho-N-acetylmuramoyl-pentapeptide-transferase.